We begin with the raw amino-acid sequence, 507 residues long: RNA polymerase I-specific transcription initiation factor RRN11 (507 aa).

Polar residues predominate over residues 37-47; that stretch reads KSTTTDSLPTP. 2 disordered regions span residues 37–76 and 89–124; these read KSTTTDSLPTPENSAAENNDEEEGQNSEAGTYRRSVLQQK and GEIYSTTESETDSQEEETEEGGEHDTGIDKEDSDEE. Over residues 97 to 108 the composition is skewed to acidic residues; sequence SETDSQEEETEE. The segment covering 109 to 124 has biased composition (basic and acidic residues); sequence GGEHDTGIDKEDSDEE.

Component of the core factor (CF) complex, which consists of RRN6, RRN7 and RRN11. The CF heterotrimer may further dimerize to form a hexamer. RRN11 interacts with RRN6, RRN7 and SPT15.

The protein localises to the nucleus. It localises to the nucleolus. Its function is as follows. Acts as a component of the core factor (CF) complex which is essential for the initiation of rDNA transcription by RNA polymerase I. After binding of UAF (upstream activation factor) to an upstream element of the promoter, CF is recruited in a SPT15/TBP-dependent manner to form a preinitiation complex. The chain is RNA polymerase I-specific transcription initiation factor RRN11 (RRN11) from Saccharomyces cerevisiae (strain ATCC 204508 / S288c) (Baker's yeast).